The chain runs to 523 residues: Maturase K (523 aa).

This sequence belongs to the intron maturase 2 family. MatK subfamily.

It is found in the plastid. Its subcellular location is the chloroplast. Its function is as follows. Usually encoded in the trnK tRNA gene intron. Probably assists in splicing its own and other chloroplast group II introns. The sequence is that of Maturase K from Asphodeline lutea (King's spear).